A 543-amino-acid polypeptide reads, in one-letter code: ADIPOR-like receptor IZH3 (543 aa).

At 1 to 259 (MMDSSSKSLT…NWYGWHNETS (259 aa)) the chain is on the lumenal side. N-linked (GlcNAc...) asparagine glycans are attached at residues N45, N123, N153, and N256. A helical membrane pass occupies residues 260–280 (NIWSHLLGAIYIIYLAIYDFP). Residues 281–295 (QSEVWRNSQVPPQAR) are Cytoplasmic-facing. A helical transmembrane segment spans residues 296–316 (WIVFMFLAAALKCMLSSVFWH). Topologically, residues 317–330 (TFNGTSFLKLRSKF) are lumenal. An N-linked (GlcNAc...) asparagine glycan is attached at N319. A helical transmembrane segment spans residues 331 to 353 (ACVDYSGITILITASILTTEFVT). Topologically, residues 354 to 357 (MYSC) are cytoplasmic. Residues 358–378 (YWAMYTYMSISLALGVFGVFM) form a helical membrane-spanning segment. Over 379-395 (NWSPRFDRPEARPLRIR) the chain is Lumenal. The chain crosses the membrane as a helical span at residues 396 to 416 (FFILLATMGVLSFLHLIFLTD). Topologically, residues 417-425 (LHYAATLFS) are cytoplasmic. A helical transmembrane segment spans residues 426–446 (PVTYKSVVWYLVGVVFYGSFI). Over 447-505 (PERFRSDVQVDKTIPTNYELSTDLEIITKQREIHFREVPTAHSKCSSCPSHAKSFKSLW) the chain is Lumenal. A helical membrane pass occupies residues 506-526 (WVDYFGCSHTFWHFFVVLGVI). Residues 527–543 (GHYRAILDMFAKRWILS) lie on the Cytoplasmic side of the membrane.

The protein belongs to the ADIPOR family.

It localises to the endoplasmic reticulum membrane. Functionally, ADIPOR-like receptor involved in zinc metabolism either by altering membrane sterol content or by directly altering cellular zinc levels. This Saccharomyces cerevisiae (strain ATCC 204508 / S288c) (Baker's yeast) protein is ADIPOR-like receptor IZH3 (IZH3).